Reading from the N-terminus, the 502-residue chain is ATP synthase subunit alpha (502 aa).

An ATP-binding site is contributed by 169–176 (GDRQTGKT).

This sequence belongs to the ATPase alpha/beta chains family. F-type ATPases have 2 components, CF(1) - the catalytic core - and CF(0) - the membrane proton channel. CF(1) has five subunits: alpha(3), beta(3), gamma(1), delta(1), epsilon(1). CF(0) has three main subunits: a(1), b(2) and c(9-12). The alpha and beta chains form an alternating ring which encloses part of the gamma chain. CF(1) is attached to CF(0) by a central stalk formed by the gamma and epsilon chains, while a peripheral stalk is formed by the delta and b chains.

It is found in the cell inner membrane. The catalysed reaction is ATP + H2O + 4 H(+)(in) = ADP + phosphate + 5 H(+)(out). In terms of biological role, produces ATP from ADP in the presence of a proton gradient across the membrane. The alpha chain is a regulatory subunit. The sequence is that of ATP synthase subunit alpha from Desulfovibrio desulfuricans (strain ATCC 27774 / DSM 6949 / MB).